Here is a 492-residue protein sequence, read N- to C-terminus: Catalase isozyme 1 (492 aa).

Catalysis depends on residues H65 and N138. Y348 provides a ligand contact to heme.

This sequence belongs to the catalase family. In terms of assembly, homotetramer. The cofactor is heme.

The protein resides in the peroxisome. The enzyme catalyses 2 H2O2 = O2 + 2 H2O. In terms of biological role, occurs in almost all aerobically respiring organisms and serves to protect cells from the toxic effects of hydrogen peroxide. The polypeptide is Catalase isozyme 1 (CAT1) (Gossypium hirsutum (Upland cotton)).